The primary structure comprises 146 residues: Large ribosomal subunit protein uL15 (146 aa).

Residues 1–42 (MTIKLHDLQPARGSKTTRTRVGRGEASKGKTAGRGTKGTKAR) form a disordered region.

This sequence belongs to the universal ribosomal protein uL15 family. In terms of assembly, part of the 50S ribosomal subunit.

Binds to the 23S rRNA. The polypeptide is Large ribosomal subunit protein uL15 (Mycobacterium leprae (strain Br4923)).